The primary structure comprises 112 residues: Larval cuticle protein 4 (112 aa).

Residues 1–16 form the signal peptide; sequence MFKILLVCALVALVAA. The Chitin-binding type R&amp;R domain occupies 31–92; it reads ADGFVSKLVL…PQSDLLPTPP (62 aa).

Functionally, component of the larval cuticle. This Drosophila melanogaster (Fruit fly) protein is Larval cuticle protein 4 (Lcp4).